Here is a 114-residue protein sequence, read N- to C-terminus: Dihydroneopterin monophosphate aldolase (114 aa).

The Zn(2+) site is built by histidine 15, histidine 26, and histidine 28.

It belongs to the PTPS family. It depends on Zn(2+) as a cofactor.

It carries out the reaction 7,8-dihydroneopterin 3'-phosphate = glycolaldehyde phosphate + 6-hydroxymethyl-7,8-dihydropterin. Its function is as follows. Catalyzes the conversion of 7,8-dihydroneopterin monophosphate (H2NMP) to 6-hydroxymethyl-7,8-dihydropterin (6-HMD). Cannot use 7,8-dihydroneopterin (H2Neo) or 7,8-dihydroneopterin triphosphate (H2NTP) as substrate. The polypeptide is Dihydroneopterin monophosphate aldolase (Pyrococcus furiosus (strain ATCC 43587 / DSM 3638 / JCM 8422 / Vc1)).